Consider the following 777-residue polypeptide: DNA repair helicase/translocase XPB-R (777 aa).

In terms of domain architecture, Helicase ATP-binding spans 212-416 (AASDGALRSG…DLFHLVGPKL (205 aa)). 225 to 232 (LPCGSGKT) contributes to the ATP binding site. A DEVH box motif is present at residues 369 to 372 (DEVH). Positions 484–631 (IVKRHVAESS…GYTCSVTEFN (148 aa)) constitute a Helicase C-terminal domain.

Belongs to the helicase family. RAD25/XPB subfamily.

It carries out the reaction Couples ATP hydrolysis with the unwinding of duplex DNA by translocating in the 3'-5' direction.. The catalysed reaction is ATP + H2O = ADP + phosphate + H(+). In terms of biological role, ATP-dependent 3'-5' DNA helicase/translocase; binds dsDNA rather than ssDNA, unzipping it in a translocase rather than classical helicase activity. Involved in nucleotide excision repair (NER) of damaged DNA. XPB-R is a paralog of XBP, but is not a component of the TFIIH basal transcription factor and is dispensable for RNA polymerase II transcription. This chain is DNA repair helicase/translocase XPB-R, found in Trypanosoma brucei brucei (strain 927/4 GUTat10.1).